The sequence spans 736 residues: Zinc finger CCCH domain-containing protein 14 (736 aa).

Position 1 is an N-acetylmethionine (Met-1). 2 stretches are compositionally biased toward polar residues: residues 77–103 (TTEPSSLKSSDTNIFDSNVPSNKSNFS) and 131–145 (VSTSSQESKTTNVRQ). Residues 77–145 (TTEPSSLKSS…QESKTTNVRQ (69 aa)) are disordered. Ser-85 carries the phosphoserine modification. Glycyl lysine isopeptide (Lys-Gly) (interchain with G-Cter in SUMO2) cross-links involve residues Lys-99, Lys-139, Lys-175, and Lys-198. The residue at position 240 (Ser-240) is a Phosphoserine. Residue Lys-245 forms a Glycyl lysine isopeptide (Lys-Gly) (interchain with G-Cter in SUMO2) linkage. The residue at position 281 (Ser-281) is a Phosphoserine. Glycyl lysine isopeptide (Lys-Gly) (interchain with G-Cter in SUMO2) cross-links involve residues Lys-283 and Lys-295. The interval 310–350 (HDGEEEEEDDDYGSRTGSISSSVSVPAKPERRPSLPPSKQA) is disordered. Phosphoserine occurs at positions 327 and 343. Position 357 is an N6-acetyllysine; alternate (Lys-357). Lys-357 participates in a covalent cross-link: Glycyl lysine isopeptide (Lys-Gly) (interchain with G-Cter in SUMO2); alternate. Residue Lys-378 forms a Glycyl lysine isopeptide (Lys-Gly) (interchain with G-Cter in SUMO2) linkage. Residues Ser-390 and Ser-409 each carry the phosphoserine modification. A disordered region spans residues 398–430 (VVQGQSRTPRISPPIKEEETKGDSVEKNQGTQQ). Basic and acidic residues predominate over residues 412–423 (IKEEETKGDSVE). A Glycyl lysine isopeptide (Lys-Gly) (interchain with G-Cter in SUMO2) cross-link involves residue Lys-413. Position 421 is a phosphoserine (Ser-421). Residue Lys-489 forms a Glycyl lysine isopeptide (Lys-Gly) (interchain with G-Cter in SUMO2) linkage. A phosphoserine mark is found at Ser-498, Ser-515, Ser-527, and Ser-620. C3H1-type zinc fingers lie at residues 595-620 (EKLLERCKYWPACKNGDECAYHHPIS), 621-640 (PCKAFPNCKFAEKCLFVHPN), 641-656 (CKYDAKCTKPDCPFTH), 682-699 (CRYFPACKKMECPFYHPK), and 701-719 (CRFNTQCTRPDCTFYHPTI).

It belongs to the ZC3H14 family. As to quaternary structure, homodimer; facilitating circular RNAs (circRNAs) formation. Associates with the spliceosome. Interacts with HOOK2. Interacts with ZFC3H1 in a RNase-sensitive manner. In terms of tissue distribution, expressed in fetal and adult brain. Expressed in fetal and adult temporal lobe.

Its subcellular location is the nucleus speckle. It is found in the cytoplasm. Functionally, RNA-binding protein involved in the biogenesis of circular RNAs (circRNAs), which are produced by back-splicing circularization of pre-mRNAs. Acts by binding to both exon-intron boundary and 3'-UTR of pre-mRNAs to promote circRNA biogenesis through dimerization and the association with the spliceosome. Required for spermatogenesis via involvement in circRNA biogenesis. Regulates the pre-mRNA processing of ATP5MC1; preventing its degradation. Also binds the poly(A) tail of mRNAs; controlling poly(A) length in neuronal cells. The sequence is that of Zinc finger CCCH domain-containing protein 14 from Homo sapiens (Human).